The sequence spans 398 residues: Lysophospholipid transporter LplT (398 aa).

11 helical membrane passes run 17–37 (AVLV…FAIL), 52–72 (ILQI…GQIA), 90–110 (LGAF…LVGV), 137–157 (GLME…GGFL), 163–183 (AIAL…NFFI), 226–246 (LFWG…PVVL), 256–276 (ILNV…ARFI), 285–305 (MPAG…HSIW), 309–329 (VLLI…NALL), 352–372 (IAML…VPVV), and 373–393 (TTGI…WIWN).

Belongs to the major facilitator superfamily. LplT (TC 2.A.1.42) family.

The protein resides in the cell inner membrane. Catalyzes the facilitated diffusion of 2-acyl-glycero-3-phosphoethanolamine (2-acyl-GPE) into the cell. This chain is Lysophospholipid transporter LplT, found in Photorhabdus laumondii subsp. laumondii (strain DSM 15139 / CIP 105565 / TT01) (Photorhabdus luminescens subsp. laumondii).